Reading from the N-terminus, the 122-residue chain is Small ribosomal subunit protein uS13 (122 aa).

A compositionally biased stretch (basic residues) spans 95–116 (GLPVRGQKTKTNARTRKGRRKT). Residues 95-122 (GLPVRGQKTKTNARTRKGRRKTVGAATK) form a disordered region.

This sequence belongs to the universal ribosomal protein uS13 family. Part of the 30S ribosomal subunit. Forms a loose heterodimer with protein S19. Forms two bridges to the 50S subunit in the 70S ribosome.

Its function is as follows. Located at the top of the head of the 30S subunit, it contacts several helices of the 16S rRNA. In the 70S ribosome it contacts the 23S rRNA (bridge B1a) and protein L5 of the 50S subunit (bridge B1b), connecting the 2 subunits; these bridges are implicated in subunit movement. Contacts the tRNAs in the A and P-sites. The chain is Small ribosomal subunit protein uS13 from Campylobacter concisus (strain 13826).